Reading from the N-terminus, the 723-residue chain is Hypoxia-inducible factor prolyl hydroxylase (723 aa).

Zn(2+)-binding residues include cysteine 39, cysteine 42, cysteine 54, cysteine 57, cysteine 63, histidine 67, histidine 75, and cysteine 79. Residues 39-79 (CTYCGSSCTSSQLQTCLFCGTVAYCSKEHQQLDWLTHKMIC) form an MYND-type; atypical zinc finger. Residues 249–270 (PSTASTATIPPPATTTSSATSS) are compositionally biased toward low complexity. Disordered regions lie at residues 249–275 (PSTA…KSET) and 294–323 (IETE…KINY). Positions 468–566 (GRSRAMLAIY…RFAITIWYMD (99 aa)) constitute a Fe2OG dioxygenase domain. Fe cation is bound by residues histidine 487, aspartate 489, and histidine 548. 2-oxoglutarate is bound at residue arginine 557. The segment at 678–723 (RTTSLQSISDHFRSERSHERRSSTSSDQDLDEGLPPPPSTNPEYYI) is disordered. Residues 687 to 699 (DHFRSERSHERRS) are compositionally biased toward basic and acidic residues.

As to quaternary structure, interacts (via catalytic domain) with lin-10 (via N-terminus); the interaction regulates lin-10 subcellular localization; the interaction is direct. Interacts (via catalytic domain) with swan-1 (via WD 1-3 repeats); the interaction may regulate vhl-1-independent hif-1 transcriptional activity; the interaction is direct. Interacts (via C-terminus) with cysl-1; the interaction is enhanced by hydrogen disulfide and activates hif-1-mediated transcription; the interaction is direct. Fe(2+) is required as a cofactor. The cofactor is L-ascorbate. As to expression, in larvae and adults, expressed in pharyngeal and body wall muscles.

Its subcellular location is the cytoplasm. The protein resides in the nucleus. It is found in the cell projection. It localises to the dendrite. The protein localises to the axon. It carries out the reaction L-prolyl-[hypoxia-inducible factor alpha subunit] + 2-oxoglutarate + O2 = trans-4-hydroxy-L-prolyl-[hypoxia-inducible factor alpha subunit] + succinate + CO2. Inhibited by Co(2+) and dimethyloxalylglycine. Inhibited by the iron chelator 2, 2'-dipyridyl. Cellular oxygen sensor which regulates the stability and the activity of hypoxia-inducible transcription factor, hif-1. In normoxic conditions, hydroxylates hif-1 targeting it for vhl-1-mediated proteasomal degradation. In addition, regulates hif-1 transcriptional activity in a vhl-1-independent manner and independently of its hydroxylase activity. By regulating hif-1 activity, controls several cellular responses. Mediates susceptibility to B.thuringiensis and V.cholerae pore-forming toxins and enteropathogenic E.coli. Mediates susceptibility to P.aeruginosa PAO1-mediated killing by regulating resistance to cyanide produced by P.aeruginosa. Mediates resistance to S.aureus-mediated killing. In addition, plays a role in heat acclimation, neuronal development, behavioral responses to reoxygenation and hydrogen sulfide, iron homeostasis and aging. In neurons, involved in mitochondrion fusion during reoxygenation. Involved in egg laying. In terms of biological role, regulates the trafficking of the glutamate receptor glr-1, probably independently of hif-1, by regulating lin-10 subcellular localization in response to oxygen levels. May hydroxylate lin-10. The protein is Hypoxia-inducible factor prolyl hydroxylase of Caenorhabditis elegans.